Here is a 518-residue protein sequence, read N- to C-terminus: ATPase expression protein 2, mitochondrial (518 aa).

A mitochondrion-targeting transit peptide spans 1-15 (MLKKSRVLGKIPIPY).

This sequence belongs to the AEP2 family. As to quaternary structure, binds to the 5'UTR of the OLI1 mRNA.

The protein resides in the mitochondrion. Its function is as follows. Required for translation of the mitochondrial OLI1 transcript coding for the mitochondrial ATP synthase subunit 9. This chain is ATPase expression protein 2, mitochondrial (AEP2), found in Kluyveromyces lactis (strain ATCC 8585 / CBS 2359 / DSM 70799 / NBRC 1267 / NRRL Y-1140 / WM37) (Yeast).